A 390-amino-acid chain; its full sequence is Protein dimmed (390 aa).

The interval 24-163 is disordered; sequence HNNNNYNTDG…RNMRRLESNE (140 aa). 2 stretches are compositionally biased toward polar residues: residues 29–44 and 55–64; these read YNTD…SAEG and RTSQLSNNTY. Residue Asn61 is glycosylated (N-linked (GlcNAc...) asparagine). Residues 69 to 78 are compositionally biased toward low complexity; sequence TDSSSQSDDT. Residues 79–90 show a composition bias toward gly residues; it reads SGGGGSSNGGGS. Positions 122-141 are enriched in low complexity; that stretch reads PSTIAPNSTSSNSSNANGNA. N-linked (GlcNAc...) asparagine glycosylation is found at Asn128, Asn133, and Asn140. Positions 151 to 163 are enriched in basic and acidic residues; that stretch reads AKERNMRRLESNE. The bHLH domain maps to 156–208; the sequence is MRRLESNERERMRMHSLNDAFQSLREVIPHVEMERRLSKIETLTLAKNYIINL. Residues Asn207 and Asn237 are each glycosylated (N-linked (GlcNAc...) asparagine). The disordered stretch occupies residues 312 to 339; the sequence is QQQQASHLPHHQQAMHGHGHLGASIQSQ. Asn347 carries an N-linked (GlcNAc...) asparagine glycan.

Forms homodimers via the bHLH domain. These dimers bind the core E-box sequence. Detected in the developing nervous system in the bilateral domains in the cephalic region that later on forms part of the ring gland. Concomitantly expressed in the larval central nervous system (CNS), including the dorsal chain neurons as well as several bilateral clusters of neurons: large, midline protocerebral brain cells (MC), lateral protocerebral brain cells (LC), ventral subesophageal neurons (SE) and lateral abdominal neurons, and the transverse nerves. Outside the CNS, detected in at least three classes of endocrine cells: intrinsic cells of the corpora cardiaca, midgut cells, the Inka cells, lateral Bipolar neurons associated with the segmental transverse nerve, and several peptidergic cells of the enteric nervous system. Expressed only in central and peripheral neuroendocrine secretory cells and neurosecretory neurons but not in sensory or motor neurons.

The protein resides in the cytoplasm. Functionally, transcription factor that regulates neurosecretory (NS) cell function and neuroendocrine cell fate. Acts as a master regulator of common NS functions such as Phm expression and neuropeptide production. Plays a role as a regulator of peptide-containing large dense-core vesicle (LDCV) production and peptidergic cell differentiation. Controls transcription of FMRFamide in Tv neuronal cells and Fur1 in Ap-let cells (Tvb and dorsal apterous cells). Also required for up-regulation of Phm in Tv and Ap-let cells, and expression of three neuropeptide genes, Ms, FMRFamide and Lk. Influences both regulated and constitutive secretory activity in neuroendocrine cells at embryonic and postembryonic level. Loss of function studies show reduced cellular levels of various neuropeptides and neuropeptide biosynthetic enzymes. The chain is Protein dimmed (dimm) from Drosophila melanogaster (Fruit fly).